The chain runs to 334 residues: Inositol 2-dehydrogenase (334 aa).

This sequence belongs to the Gfo/Idh/MocA family. In terms of assembly, homotetramer.

The catalysed reaction is myo-inositol + NAD(+) = scyllo-inosose + NADH + H(+). Functionally, involved in the oxidation of myo-inositol (MI) to 2-keto-myo-inositol (2KMI or 2-inosose). This chain is Inositol 2-dehydrogenase, found in Cereibacter sphaeroides (strain ATCC 17023 / DSM 158 / JCM 6121 / CCUG 31486 / LMG 2827 / NBRC 12203 / NCIMB 8253 / ATH 2.4.1.) (Rhodobacter sphaeroides).